A 500-amino-acid polypeptide reads, in one-letter code: 4-aminobutyrate aminotransferase, mitochondrial (500 aa).

Residues 1 to 28 (MASVLLTRRLACSFRHNHRLLVPGWRHI) constitute a mitochondrion transit peptide. Residue Cys163 coordinates [2Fe-2S] cluster. Position 164-165 (164-165 (GS)) interacts with pyridoxal 5'-phosphate. [2Fe-2S] cluster is bound at residue Cys166. Arg220 contributes to the substrate binding site. N6-succinyllysine is present on Lys231. At Lys252 the chain carries N6-acetyllysine; alternate. Position 252 is an N6-succinyllysine; alternate (Lys252). N6-acetyllysine occurs at positions 279 and 318. Lys357 bears the N6-(pyridoxal phosphate)lysine mark. Position 381 (Thr381) interacts with pyridoxal 5'-phosphate. Position 413 is an N6-acetyllysine; alternate (Lys413). Lys413 carries the post-translational modification N6-succinyllysine; alternate. 2 positions are modified to N6-acetyllysine: Lys452 and Lys470.

This sequence belongs to the class-III pyridoxal-phosphate-dependent aminotransferase family. Homodimer; disulfide-linked. It depends on pyridoxal 5'-phosphate as a cofactor. The cofactor is [2Fe-2S] cluster.

The protein resides in the mitochondrion matrix. It carries out the reaction 4-aminobutanoate + 2-oxoglutarate = succinate semialdehyde + L-glutamate. It catalyses the reaction (S)-3-amino-2-methylpropanoate + 2-oxoglutarate = 2-methyl-3-oxopropanoate + L-glutamate. Its function is as follows. Catalyzes the conversion of gamma-aminobutyrate and L-beta-aminoisobutyrate to succinate semialdehyde and methylmalonate semialdehyde, respectively. Can also convert delta-aminovalerate and beta-alanine. This chain is 4-aminobutyrate aminotransferase, mitochondrial (ABAT), found in Sus scrofa (Pig).